Here is a 581-residue protein sequence, read N- to C-terminus: Proteasome-associated ATPase (581 aa).

The segment at 1 to 28 (MTSSDLTQRKGLTMSDSTPDTPRSTPED) is disordered. A compositionally biased stretch (polar residues) spans 14–24 (MSDSTPDTPRS). A coiled-coil region spans residues 27 to 66 (EDAARRLAVLSAQNERLAQVLGEARGKIVELQQQIEEFAK). 248–253 (GCGKTL) contacts ATP. The interval 561–581 (GSGRSAAGRTIETATSTGQYL) is disordered. Residues 572-581 (ETATSTGQYL) show a composition bias toward polar residues. The interval 580-581 (YL) is docks into pockets in the proteasome alpha-ring.

The protein belongs to the AAA ATPase family. In terms of assembly, homohexamer. Assembles into a hexameric ring structure that caps the 20S proteasome core. Strongly interacts with the prokaryotic ubiquitin-like protein Pup through a hydrophobic interface; the interacting region of ARC lies in its N-terminal coiled-coil domain. There is one Pup binding site per ARC hexamer ring. Upon ATP-binding, the C-terminus of ARC interacts with the alpha-rings of the proteasome core, possibly by binding to the intersubunit pockets.

Its pathway is protein degradation; proteasomal Pup-dependent pathway. ATPase which is responsible for recognizing, binding, unfolding and translocation of pupylated proteins into the bacterial 20S proteasome core particle. May be essential for opening the gate of the 20S proteasome via an interaction with its C-terminus, thereby allowing substrate entry and access to the site of proteolysis. Thus, the C-termini of the proteasomal ATPase may function like a 'key in a lock' to induce gate opening and therefore regulate proteolysis. The chain is Proteasome-associated ATPase from Sanguibacter keddieii (strain ATCC 51767 / DSM 10542 / NCFB 3025 / ST-74).